Here is a 226-residue protein sequence, read N- to C-terminus: Ribose-5-phosphate isomerase A (226 aa).

Residues 29-32, 84-87, and 97-100 each bind substrate; these read TGST, DGAD, and KGGG. Glu106 functions as the Proton acceptor in the catalytic mechanism. Lys124 contacts substrate.

It belongs to the ribose 5-phosphate isomerase family. Homodimer.

The enzyme catalyses aldehydo-D-ribose 5-phosphate = D-ribulose 5-phosphate. Its pathway is carbohydrate degradation; pentose phosphate pathway; D-ribose 5-phosphate from D-ribulose 5-phosphate (non-oxidative stage): step 1/1. Its function is as follows. Catalyzes the reversible conversion of ribose-5-phosphate to ribulose 5-phosphate. The chain is Ribose-5-phosphate isomerase A from Methanothermobacter thermautotrophicus (strain ATCC 29096 / DSM 1053 / JCM 10044 / NBRC 100330 / Delta H) (Methanobacterium thermoautotrophicum).